We begin with the raw amino-acid sequence, 387 residues long: MELDRDKKTFAYFWLFGLINNILYVVILSAASDIIGPSLPKSIVLLFDIMPSFLIKLSAPFFVHSIHYDKRIPILILLSMLGIILVSTRSLWLCLPGIVLASLSSGFGEITFLQLTHFFGSKSLTGWSSGTGGAGIVGSFSYLLLTTVFRLNIQLSLLLYAALPLIFLLYYKINDSIVSSQVYQSLDMPIDSSDGPIELLKSNGWVDIVKRLSKLVIPYMIPLSTVYLFEYLINQGVAPTLLFPIDTTPFVKYRDIYVTYGTLYQLGVFISRTWGHKLPVKNLYLFSVLQLINLLITLSQSYYYWTDSISWIMVLIFYEGLIGGSSYVNCFMNILKDVDPNEREFVLGSVSISDSLGTLIAAFLGIILEPSLCKHQIGTGRPWCRME.

Residues 1–31 (MELDRDKKTFAYFWLFGLINNILYVVILSAA) form the signal peptide. 10 consecutive transmembrane segments (helical) span residues 43–63 (IVLLFDIMPSFLIKLSAPFFV), 72–92 (IPILILLSMLGIILVSTRSLW), 93–113 (LCLPGIVLASLSSGFGEITFL), 129–149 (SGTGGAGIVGSFSYLLLTTVF), 151–171 (LNIQLSLLLYAALPLIFLLYY), 225–245 (TVYLFEYLINQGVAPTLLFPI), 257–276 (YVTYGTLYQLGVFISRTWGH), 278–298 (LPVKNLYLFSVLQLINLLITL), 308–328 (SISWIMVLIFYEGLIGGSSYV), and 347–367 (LGSVSISDSLGTLIAAFLGII).

The protein belongs to the battenin family.

The protein localises to the vacuole membrane. Its function is as follows. Involved in vacuolar transport and vacuole pH homeostasis. Also required for cytokinesis. In Kluyveromyces lactis (strain ATCC 8585 / CBS 2359 / DSM 70799 / NBRC 1267 / NRRL Y-1140 / WM37) (Yeast), this protein is Protein BTN1 (BTN1).